Here is a 115-residue protein sequence, read N- to C-terminus: Immunoglobulin kappa variable 5-48 (115 aa).

Positions 1 to 20 are cleaved as a signal peptide; the sequence is MVSTPQFLVFLLFWIPASRG. The framework-1 stretch occupies residues 21–43; it reads DILLTQSPAILSVSPGERVSFSC. The cysteines at positions 43 and 108 are disulfide-linked. The complementarity-determining-1 stretch occupies residues 44-54; sequence RASQSIGTSIH. The interval 55–69 is framework-2; it reads WYQQRTNGSPRLLIK. The complementarity-determining-2 stretch occupies residues 70-76; that stretch reads YASESIS. A framework-3 region spans residues 77-108; that stretch reads GIPSRFSGSGSGTDFTLSINSVESEDIADYYC. The tract at residues 109-115 is complementarity-determining-3; sequence QQSNSWP.

The polypeptide is Immunoglobulin kappa variable 5-48 (Mus musculus (Mouse)).